The primary structure comprises 1329 residues: Synergin gamma (1329 aa).

Residues 112 to 152 (MQKQFAEEQQKRFEQQQKLLEEERKRRQFEEQKQKLRLLSS) are a coiled coil. Residues 175-211 (GFSRDAKMHPTPASHPKKPDCPTSSHSTKTVSPSSAF) are disordered. The span at 197 to 209 (TSSHSTKTVSPSS) shows a compositional bias: low complexity. Residues 393-504 (NESLVPDAYK…TPVSQPTAMT (112 aa)) enclose the EH domain. Residues 555 to 559 (DFQDF) carry the DFXDF motif 1 motif. At Ser571 the chain carries Phosphoserine. Residues 578–594 (VPASSKTSNSQHGNSAP) are compositionally biased toward polar residues. The interval 578–600 (VPASSKTSNSQHGNSAPSLLIPL) is disordered. Lys609 is subject to N6-acetyllysine. The interaction with AP1G1 stretch occupies residues 614 to 878 (KGISAEKPSE…ADFHSSKFSS (265 aa)). Disordered regions lie at residues 661 to 701 (GTDD…TQTQ) and 730 to 753 (AFSTSKSVSSRPQPAGSAAAPASL). Ser676 bears the Phosphoserine mark. Residues 761-773 (LADDFGEFNLFGE) form an interaction with AP1G1, AP1G2 and GGA1 region. The DFXDF motif 2 motif lies at 785-789 (DFADF). The interval 797-835 (IPSEPKADDKYEALREEGSPGALSTSTVEGAHNPPVSSS) is disordered. Residues 801–814 (PKADDKYEALREEG) show a composition bias toward basic and acidic residues. Residue Ser815 is modified to Phosphoserine. Position 836 is an N6-acetyllysine (Lys836). A phosphoserine mark is found at Ser844 and Ser864. Disordered stretches follow at residues 856-922 (KENT…DSED), 941-1042 (HVMS…FGEF), and 1088-1113 (SLSLGDKEISRSSPSPALEQPFRDRS). The span at 864 to 873 (SDGDFADFHS) shows a compositional bias: basic and acidic residues. The short motif at 867 to 871 (DFADF) is the DFXDF motif 3 element. Over residues 874–883 (SKFSSTSSDK) the composition is skewed to low complexity. Phosphoserine occurs at positions 904, 944, 947, 997, 1021, 1088, 1090, 1102, and 1113. The segment covering 944–955 (SDSSLDLPTVSG) has biased composition (polar residues). Residues 1016 to 1028 (ENTCPSPASSVAS) are compositionally biased toward polar residues. At Thr1115 the chain carries Phosphothreonine.

Self-associates. Interacts with GGA1 (via GAE domain). Interacts with GGA2 and GGA3. Interacts with AP1G1 (via GAE domain), a subunit of adapter protein complex AP-1. Interacts with AP1G2 (via GAE domain) a subunit of adapter protein complex AP-1. Component of the aftiphilin/p200/gamma-synergin complex, at least composed of AFTPH/aftiphilin, HEATR5B/p200a and SYNRG/gamma-synergin, which plays a role in the AP1G1/AP-1-mediated trafficking of transferrin from early to recycling endosomes. Within the complex interacts with AFTPH/aftiphilin and HEATR5B/p200a; the interactions are direct. Interacts (via EH domain) with SCAMP1. Detected in brain and liver (at protein level). Ubiquitously expressed.

It localises to the cytoplasm. The protein localises to the golgi apparatus. The protein resides in the trans-Golgi network membrane. It is found in the perinuclear region. Its subcellular location is the cytoplasmic vesicle. It localises to the clathrin-coated vesicle. Plays a role in endocytosis and/or membrane trafficking at the trans-Golgi network (TGN). May act by linking the adapter protein complex AP-1 to other proteins. Component of clathrin-coated vesicles. Component of the aftiphilin/p200/gamma-synergin complex, which plays roles in AP1G1/AP-1-mediated protein trafficking including the trafficking of transferrin from early to recycling endosomes, and the membrane trafficking of furin and the lysosomal enzyme cathepsin D between the trans-Golgi network (TGN) and endosomes. In Rattus norvegicus (Rat), this protein is Synergin gamma (Synrg).